Consider the following 167-residue polypeptide: Zymogen granule membrane protein 16 (167 aa).

An N-terminal signal peptide occupies residues 1–16 (MLTVALLALLCASASG). The region spanning 24-159 (SSYSGEYGGG…IDAIGLHWDV (136 aa)) is the Jacalin-type lectin domain.

This sequence belongs to the jacalin lectin family. In terms of tissue distribution, highly expressed in liver. Detected at lower levels in colon, ileum and jejunum.

The protein localises to the secreted. It is found in the extracellular space. It localises to the extracellular matrix. Its subcellular location is the zymogen granule lumen. The protein resides in the golgi apparatus lumen. Its function is as follows. May play a role in protein trafficking. May act as a linker molecule between the submembranous matrix on the luminal side of zymogen granule membrane (ZGM) and aggregated secretory proteins during granule formation in the TGN. The sequence is that of Zymogen granule membrane protein 16 (ZG16) from Homo sapiens (Human).